Consider the following 219-residue polypeptide: Hemolysin-3 (219 aa).

Transmembrane regions (helical) follow at residues 19 to 39, 49 to 69, 83 to 103, 112 to 132, 138 to 158, 165 to 185, and 194 to 214; these read AITH…LIIH, VVAF…STLL, ILDH…FLLI, TLLA…IFFV, ASTL…KPLY, GFSL…FFLW, and IWHL…LFYV.

This sequence belongs to the UPF0073 (Hly-III) family.

Its subcellular location is the cell membrane. Its function is as follows. Might be virulent against a mammalian host; when expressed in E.coli, the soluble extract has hemolytic activity on human erythrocytes. The activity is not inhibited by cholesterol or activated by 2-mercaptoethanol. Might be pore-forming protein. Its in vivo role in virulence is untested, nor has it been shown to be secreted by B.cereus. The sequence is that of Hemolysin-3 from Bacillus cereus.